The sequence spans 288 residues: UPF0494 membrane protein C212.04c (288 aa).

4 helical membrane-spanning segments follow: residues 107 to 127 (WVLLIIWSIITILTIDKKFKI), 144 to 164 (IWGPIVIYVGLFILLLSAFNY), 174 to 194 (PLISMVIAWVGVVIAAFSVII), and 198 to 218 (IAGVIAAFSVIITATIAGVIA).

It belongs to the UPF0494 family.

The protein localises to the cytoplasm. It localises to the endoplasmic reticulum. Its subcellular location is the membrane. The sequence is that of UPF0494 membrane protein C212.04c from Schizosaccharomyces pombe (strain 972 / ATCC 24843) (Fission yeast).